The chain runs to 207 residues: Large ribosomal subunit protein uL4 (207 aa).

The tract at residues 52 to 76 (KNTSLVSGGGKKPWKQKGTGRARQG) is disordered.

Belongs to the universal ribosomal protein uL4 family. Part of the 50S ribosomal subunit.

One of the primary rRNA binding proteins, this protein initially binds near the 5'-end of the 23S rRNA. It is important during the early stages of 50S assembly. It makes multiple contacts with different domains of the 23S rRNA in the assembled 50S subunit and ribosome. Its function is as follows. Forms part of the polypeptide exit tunnel. This is Large ribosomal subunit protein uL4 from Myxococcus xanthus (strain DK1622).